The chain runs to 217 residues: Ribosomal large subunit pseudouridine synthase E (217 aa).

A compositionally biased stretch (polar residues) spans 19 to 28 (HQVKRFSSQR). The segment at 19–38 (HQVKRFSSQRSTRRKPENQP) is disordered. Catalysis depends on Asp79, which acts as the Nucleophile.

The protein belongs to the pseudouridine synthase RsuA family.

It carries out the reaction uridine(2457) in 23S rRNA = pseudouridine(2457) in 23S rRNA. Its function is as follows. Responsible for synthesis of pseudouridine from uracil-2457 in 23S ribosomal RNA. In Escherichia coli O157:H7, this protein is Ribosomal large subunit pseudouridine synthase E (rluE).